Consider the following 418-residue polypeptide: MAIQDEMRQVAEGAREASRTLSRMPTEIKDRALKEMAERLLQQAGWLMQENEKDVAFAKNLGLSPAMIDRLTLKESTIRDMADGILEVASLPDPVGKVTSMWRRPNGLLVGRMRIPLGVIGIIYESRPNVTADAAALCLKSGNAVILRGGSEAIHSNIAIGRLLKDVLKETSLPEAAIQVVETTDREAVYELLQLEEYIDLIIPRGGEDLIRAVVRQSRIPVIKHYKGVCHVFVDADADLEMAAKICLNAKIQRPGVCNAMETLLVHREAAPRFLPELARKLRESHVVIRGCEETCALISDAEQATEADWYREYLDLVLSIRVVGGIEEAMDHIARYGSLHTESIVTNDYANAQRFLNEVNSSTVLVNASTRFSDGFQLGLGAEIGISTTKLHAYGPMGLEELTTTKFIVYGNGQVRT.

The segment covering 1–18 (MAIQDEMRQVAEGAREAS) has biased composition (basic and acidic residues). Residues 1-22 (MAIQDEMRQVAEGAREASRTLS) form a disordered region.

It belongs to the gamma-glutamyl phosphate reductase family.

It localises to the cytoplasm. The catalysed reaction is L-glutamate 5-semialdehyde + phosphate + NADP(+) = L-glutamyl 5-phosphate + NADPH + H(+). It participates in amino-acid biosynthesis; L-proline biosynthesis; L-glutamate 5-semialdehyde from L-glutamate: step 2/2. Functionally, catalyzes the NADPH-dependent reduction of L-glutamate 5-phosphate into L-glutamate 5-semialdehyde and phosphate. The product spontaneously undergoes cyclization to form 1-pyrroline-5-carboxylate. In Syntrophus aciditrophicus (strain SB), this protein is Gamma-glutamyl phosphate reductase.